The primary structure comprises 1499 residues: Rho GTPase-activating protein 35 (1499 aa).

The interval 1 to 266 (MMMARKQDVR…IPYFEALKQQ (266 aa)) is has GTPase activity, required for proper localization. GTP is bound by residues Lys28, 33–37 (IGKSC), Leu52, Ser56, 95–97 (EQT), 201–203 (KCD), and 229–231 (SAR). 4 consecutive FF domains span residues 270–327 (IATA…HIHR), 368–422 (KLLE…HLEK), 429–483 (RAEM…HQKQ), and 485–550 (IDRA…HIHF). Tyr308 bears the Phosphotyrosine mark. A Phosphoserine modification is found at Ser589. The region spanning 592 to 767 (DPNIDRINLV…LLDSKRNLNL (176 aa)) is the pG1 pseudoGTPase domain. Phosphoserine occurs at positions 770 and 773. The 165-residue stretch at 783 to 947 (RIVMCLMCGD…FKDVVEKKNI (165 aa)) folds into the pG2 pseudoGTPase domain. Residues Ser970, Ser975, Ser985, and Ser1072 each carry the phosphoserine modification. The residue at position 1087 (Tyr1087) is a Phosphotyrosine. Position 1105 is a phosphotyrosine; by ABL2 and PTK6 (Tyr1105). The span at 1124 to 1141 (KAQSNGSGNGSDSEMDTS) shows a compositional bias: polar residues. Residues 1124-1148 (KAQSNGSGNGSDSEMDTSSLERGRK) are disordered. Residues Ser1134, Ser1142, Ser1150, Ser1176, Ser1179, and Ser1221 each carry the phosphoserine modification. The tract at residues 1177–1207 (VGSDDELGPIRKKEEDQASQGYKGDNAVIPY) is disordered. The required for phospholipid binding and regulation of the substrate preference stretch occupies residues 1213–1236 (PRRRNILRSLRRNTKKPKPKPRPS). Thr1226 bears the Phosphothreonine mark. A Phosphoserine modification is found at Ser1236. One can recognise a Rho-GAP domain in the interval 1249-1436 (VPLTTVVTPE…LFIQQCPFFF (188 aa)). The interval 1446–1499 (GAAPGSPSAMAPTVPFLTSTPATSQPSPPQSPPPTPQSPMQPLLSSQLQAEHTL) is disordered. Residues 1448-1470 (APGSPSAMAPTVPFLTSTPATSQ) are compositionally biased toward low complexity. Residues 1471-1484 (PSPPQSPPPTPQSP) are compositionally biased toward pro residues. Phosphoserine is present on residues Ser1472 and Ser1476. Thr1480 is subject to Phosphothreonine. Position 1483 is a phosphoserine (Ser1483). The span at 1485 to 1499 (MQPLLSSQLQAEHTL) shows a compositional bias: low complexity.

In terms of assembly, interacts with RASA1. Interacts with the general transcription factor GTF2I, the interaction sequesters GTF2I in the cytoplasm. In terms of processing, phosphorylation of Tyr-1105 by PTK6 promotes the association with RASA1, inactivating RHOA while activating RAS. Phosphorylation at Tyr-308 by PDGFRA inhibits binding to GTF2I. Phosphorylated by PRKCA at Ser-1221 and Thr-1226, induces relocalization from the cytoplasm to regions of plasma membrane ruffling and prevents the binding and substrate specificity regulation by phospholipids. In brain, phosphorylated by FYN and SRC. During focal adhesion formation, phosphorylated by MAPK1 and MAPK3 at the C-terminal region, probably at Ser-1451, Ser-1476, Thr-1480 and Ser-1483. Phosphorylation by MAPK1 and MAPK3 inhibits GAP function and localizes ARGHAP35 away from newly forming focal adhesions and stress fibers in cells spreading on fibronectin. Phosphorylation at Ser-1476 and Thr-1480 by GSK3B requires priming by MAPK and inhibits RhoGAP activity and modulates polarized cell migration. Ubiquitously expressed.

The protein localises to the cytoplasm. The protein resides in the cytoskeleton. It localises to the cilium basal body. Its subcellular location is the nucleus. It is found in the cell membrane. In terms of biological role, rho GTPase-activating protein (GAP). Binds several acidic phospholipids which inhibits the Rho GAP activity to promote the Rac GAP activity. This binding is inhibited by phosphorylation by PRKCA. Involved in cell differentiation as well as cell adhesion and migration, plays an important role in retinal tissue morphogenesis, neural tube fusion, midline fusion of the cerebral hemispheres and mammary gland branching morphogenesis. Transduces signals from p21-ras to the nucleus, acting via the ras GTPase-activating protein (GAP). Transduces SRC-dependent signals from cell-surface adhesion molecules, such as laminin, to promote neurite outgrowth. Regulates axon outgrowth, guidance and fasciculation. Modulates Rho GTPase-dependent F-actin polymerization, organization and assembly, is involved in polarized cell migration and in the positive regulation of ciliogenesis and cilia elongation. During mammary gland development, is required in both the epithelial and stromal compartments for ductal outgrowth. Represses transcription of the glucocorticoid receptor by binding to the cis-acting regulatory sequence 5'-GAGAAAAGAAACTGGAGAAACTC-3'; this function is however unclear and would need additional experimental evidences. The polypeptide is Rho GTPase-activating protein 35 (Rattus norvegicus (Rat)).